A 514-amino-acid chain; its full sequence is ATP synthase subunit alpha (514 aa).

Gly170 to Thr177 contacts ATP.

This sequence belongs to the ATPase alpha/beta chains family. As to quaternary structure, F-type ATPases have 2 components, CF(1) - the catalytic core - and CF(0) - the membrane proton channel. CF(1) has five subunits: alpha(3), beta(3), gamma(1), delta(1), epsilon(1). CF(0) has three main subunits: a(1), b(2) and c(9-12). The alpha and beta chains form an alternating ring which encloses part of the gamma chain. CF(1) is attached to CF(0) by a central stalk formed by the gamma and epsilon chains, while a peripheral stalk is formed by the delta and b chains.

The protein resides in the cell inner membrane. It carries out the reaction ATP + H2O + 4 H(+)(in) = ADP + phosphate + 5 H(+)(out). In terms of biological role, produces ATP from ADP in the presence of a proton gradient across the membrane. The alpha chain is a regulatory subunit. This Psychrobacter cryohalolentis (strain ATCC BAA-1226 / DSM 17306 / VKM B-2378 / K5) protein is ATP synthase subunit alpha.